Consider the following 543-residue polypeptide: 2-succinyl-5-enolpyruvyl-6-hydroxy-3-cyclohexene-1-carboxylate synthase (543 aa).

Belongs to the TPP enzyme family. MenD subfamily. In terms of assembly, homodimer. It depends on Mg(2+) as a cofactor. Requires Mn(2+) as cofactor. Thiamine diphosphate is required as a cofactor.

The catalysed reaction is isochorismate + 2-oxoglutarate + H(+) = 5-enolpyruvoyl-6-hydroxy-2-succinyl-cyclohex-3-ene-1-carboxylate + CO2. Its pathway is quinol/quinone metabolism; 1,4-dihydroxy-2-naphthoate biosynthesis; 1,4-dihydroxy-2-naphthoate from chorismate: step 2/7. It functions in the pathway quinol/quinone metabolism; menaquinone biosynthesis. Functionally, catalyzes the thiamine diphosphate-dependent decarboxylation of 2-oxoglutarate and the subsequent addition of the resulting succinic semialdehyde-thiamine pyrophosphate anion to isochorismate to yield 2-succinyl-5-enolpyruvyl-6-hydroxy-3-cyclohexene-1-carboxylate (SEPHCHC). This is 2-succinyl-5-enolpyruvyl-6-hydroxy-3-cyclohexene-1-carboxylate synthase from Corynebacterium glutamicum (strain R).